A 211-amino-acid chain; its full sequence is RNA chaperone ProQ (211 aa).

Positions arginine 113–phenylalanine 147 are disordered.

Belongs to the ProQ family.

The protein localises to the cytoplasm. In terms of biological role, RNA chaperone with significant RNA binding, RNA strand exchange and RNA duplexing activities. This Histophilus somni (strain 129Pt) (Haemophilus somnus) protein is RNA chaperone ProQ.